The primary structure comprises 341 residues: Heat-shock protein cognate (HSC) co-chaperone sgt12 (341 aa).

Positions proline 86 to alanine 123 are disordered. TPR repeat units follow at residues serine 114–asparagine 147, proline 148–tyrosine 181, and serine 182–glycine 215. Positions glutamate 232–aspartate 280 are disordered. The span at glycine 269 to methionine 278 shows a compositional bias: gly residues.

The protein belongs to the SGT family. As to quaternary structure, forms homodimers. Component of the get4/get5/sgt2 sorting complex. Dimers of sgt2 bind directly a single get5. Binds HSC family members ssa1, sse1, hsp104 and hsc82 via its TPR domain.

The protein localises to the cytoplasm. Heat-shock protein cognate (HSC) co-chaperone that preferentially binds endoplasmic reticulum-destined tail-anchored (TA) proteins and directs them to the GET (guided entry of TA proteins) pathway via get4 and get5. Get4 and get5 form an obligate complex that catalyzes the transfer of tail-anchored proteins destined to the endoplasmic reticulum from sgt2 to the cytosolic targeting factor which then targets the TA protein to the ER membrane via get1/get2. This chain is Heat-shock protein cognate (HSC) co-chaperone sgt12, found in Aspergillus fumigatus (strain ATCC MYA-4609 / CBS 101355 / FGSC A1100 / Af293) (Neosartorya fumigata).